Reading from the N-terminus, the 99-residue chain is PE-PGRS family protein PE25 (99 aa).

The PE domain maps to 1–92; that stretch reads MSFVITNPEA…GADKYATAEA (92 aa). Ser2 carries the N-acetylserine modification.

Belongs to the mycobacterial PE family. As to quaternary structure, forms a heterodimer with PPE41. The dimer forms a 1:1:1 heterotrimeric complex with EspG5. Interacts with PPE51.

Its subcellular location is the secreted. Its function is as follows. The PE25/PPE41 dimer induces both a strong humoral and cellular immune response. PE25 protein alone induces low response. The dimer induces necrosis, but not apoptosis, in mouse macrophage cells. It also induces activation and maturation of mouse dendritic cells and drives Th2-biased immune responses. The sequence is that of PE-PGRS family protein PE25 from Mycobacterium tuberculosis (strain ATCC 25618 / H37Rv).